The chain runs to 615 residues: DNA mismatch repair protein MutL (615 aa).

The interval histidine 362–tyrosine 397 is disordered. Over residues proline 378 to proline 391 the composition is skewed to low complexity.

Belongs to the DNA mismatch repair MutL/HexB family.

Its function is as follows. This protein is involved in the repair of mismatches in DNA. It is required for dam-dependent methyl-directed DNA mismatch repair. May act as a 'molecular matchmaker', a protein that promotes the formation of a stable complex between two or more DNA-binding proteins in an ATP-dependent manner without itself being part of a final effector complex. The polypeptide is DNA mismatch repair protein MutL (Escherichia coli O17:K52:H18 (strain UMN026 / ExPEC)).